The primary structure comprises 60 residues: Small ribosomal subunit protein bS21 (60 aa).

The tract at residues 39-60 (ETPQEKRKRKAVARRRQRTRRR) is disordered. Residues 44–60 (KRKRKAVARRRQRTRRR) are compositionally biased toward basic residues.

It belongs to the bacterial ribosomal protein bS21 family.

In Microcystis aeruginosa (strain NIES-843 / IAM M-2473), this protein is Small ribosomal subunit protein bS21.